We begin with the raw amino-acid sequence, 465 residues long: Pancreatic triacylglycerol lipase (465 aa).

The first 16 residues, 1–16 (MLLLWALPLLLGAVAG), serve as a signal peptide directing secretion. Disulfide bonds link cysteine 20–cysteine 26 and cysteine 108–cysteine 119. The active-site Nucleophile is the serine 170. Aspartate 194 functions as the Charge relay system in the catalytic mechanism. Ca(2+)-binding residues include glutamate 205, arginine 208, aspartate 210, and aspartate 213. Residues cysteine 255 and cysteine 279 are joined by a disulfide bond. The Charge relay system role is filled by histidine 281. Cystine bridges form between cysteine 303–cysteine 314, cysteine 317–cysteine 321, and cysteine 449–cysteine 465. The 111-residue stretch at 355–465 (WRYQVAVTLS…EDILLTLTPC (111 aa)) folds into the PLAT domain.

It belongs to the AB hydrolase superfamily. Lipase family. Forms a 1:1 stoichiometric complex with (pro)colipase/CLPS.

The protein resides in the secreted. It carries out the reaction a triacylglycerol + H2O = a diacylglycerol + a fatty acid + H(+). The enzyme catalyses 1,2,3-tributanoylglycerol + H2O = dibutanoylglycerol + butanoate + H(+). The catalysed reaction is 1,2,3-tri-(9Z-octadecenoyl)-glycerol + H2O = di-(9Z)-octadecenoylglycerol + (9Z)-octadecenoate + H(+). It catalyses the reaction all-trans-retinyl hexadecanoate + H2O = all-trans-retinol + hexadecanoate + H(+). It carries out the reaction 1,2-di-(9Z-octadecenoyl)-glycerol + H2O = (9Z-octadecenoyl)-glycerol + (9Z)-octadecenoate + H(+). Its activity is regulated as follows. Inhibited by bile salts, is reactivated by (pro)colipase/CLPS. Functionally, plays an important role in fat metabolism. It preferentially splits the esters of long-chain fatty acids at positions 1 and 3, producing mainly 2-monoacylglycerol and free fatty acids, and shows considerably higher activity against insoluble emulsified substrates than against soluble ones. This chain is Pancreatic triacylglycerol lipase (PNLIP), found in Oryctolagus cuniculus (Rabbit).